Consider the following 354-residue polypeptide: uncharacterized protein (354 aa).

Belongs to the asfivirus B354L family.

This is an uncharacterized protein from Ornithodoros (relapsing fever ticks).